A 430-amino-acid chain; its full sequence is Adenylosuccinate synthetase (430 aa).

Residues 12–18 (GDEGKGK) and 40–42 (GHT) each bind GTP. Residue D13 is the Proton acceptor of the active site. 2 residues coordinate Mg(2+): D13 and G40. Residues 13–16 (DEGK), 38–41 (NAGH), T128, R142, Q223, T238, and R302 each bind IMP. H41 (proton donor) is an active-site residue. Substrate is bound at residue 298-304 (TTTGRPR). GTP-binding positions include R304, 330–332 (LLD), and 412–414 (SVG).

It belongs to the adenylosuccinate synthetase family. Homodimer. It depends on Mg(2+) as a cofactor.

The protein resides in the cytoplasm. It carries out the reaction IMP + L-aspartate + GTP = N(6)-(1,2-dicarboxyethyl)-AMP + GDP + phosphate + 2 H(+). It participates in purine metabolism; AMP biosynthesis via de novo pathway; AMP from IMP: step 1/2. Plays an important role in the de novo pathway of purine nucleotide biosynthesis. Catalyzes the first committed step in the biosynthesis of AMP from IMP. The chain is Adenylosuccinate synthetase from Listeria monocytogenes serovar 1/2a (strain ATCC BAA-679 / EGD-e).